A 43-amino-acid chain; its full sequence is Oxygen-evolving enhancer protein 2 (43 aa).

This sequence belongs to the PsbP family.

It localises to the plastid. It is found in the chloroplast thylakoid membrane. May be involved in the regulation of photosystem II. The sequence is that of Oxygen-evolving enhancer protein 2 from Physcomitrium patens (Spreading-leaved earth moss).